The chain runs to 413 residues: MSASVSPLAPKYYPAMPVIHGVRIATAAAGIKYKGRTDLMLMVFDRPAEAAGVFTRSLCPSAPVDFCRRNLVHGKARAVVVNSGNANAFTGLKGREATQATAEAAAKAIGCATTDIFLASTGVIGEPLDAGKFSHLLGDMAESATEDFWTEAAKAIMTTDTYPKVATETVLLGQVPVTINGIAKGAGMIAPDMATMLSFVVTDAPIKADALQSLLSKGVGSTFNSVTVDSDTSTSDTLMLFATGTAAERGAPEITDAADKRLADFKKALGRVLKSLALQVVRDGEGARKMVEVEVTGAKSAASAKKIALSIANSPLVKTAVAGEDANWGRVVMAVGKAGEPADRDRLAIWFGDIRVAHQGERDPAYSEDATSAYMEGEDIRIRVDLSIGRGKATVWTCDLTKEYVAINGDYRS.

Substrate is bound by residues T158, K184, T195, E285, N408, and S413. T195 (nucleophile) is an active-site residue.

Belongs to the ArgJ family. In terms of assembly, heterotetramer of two alpha and two beta chains.

Its subcellular location is the cytoplasm. The catalysed reaction is N(2)-acetyl-L-ornithine + L-glutamate = N-acetyl-L-glutamate + L-ornithine. It catalyses the reaction L-glutamate + acetyl-CoA = N-acetyl-L-glutamate + CoA + H(+). The protein operates within amino-acid biosynthesis; L-arginine biosynthesis; L-ornithine and N-acetyl-L-glutamate from L-glutamate and N(2)-acetyl-L-ornithine (cyclic): step 1/1. It functions in the pathway amino-acid biosynthesis; L-arginine biosynthesis; N(2)-acetyl-L-ornithine from L-glutamate: step 1/4. Its function is as follows. Catalyzes two activities which are involved in the cyclic version of arginine biosynthesis: the synthesis of N-acetylglutamate from glutamate and acetyl-CoA as the acetyl donor, and of ornithine by transacetylation between N(2)-acetylornithine and glutamate. This Brucella melitensis biotype 1 (strain ATCC 23456 / CCUG 17765 / NCTC 10094 / 16M) protein is Arginine biosynthesis bifunctional protein ArgJ.